The primary structure comprises 174 residues: Protein PopB (174 aa).

A disordered region spans residues 1–174 (MSHSKIKAGG…EAMKIKDDDD (174 aa)). Residues 50 to 65 (LNKSNLGSDSQTWTPG) show a composition bias toward polar residues. Over residues 66 to 78 (STMVSLKSRSSSS) the composition is skewed to low complexity. Residues 79-89 (HKPDTGGDTKP) are compositionally biased toward basic and acidic residues. Positions 147 to 161 (IALQRAIQRQTQTRQ) are enriched in low complexity. The segment covering 162-174 (KMQEAMKIKDDDD) has biased composition (basic and acidic residues).

It localises to the secreted. In terms of biological role, probably involved in host-pathogen interactions. This Ralstonia nicotianae (strain ATCC BAA-1114 / GMI1000) (Ralstonia solanacearum) protein is Protein PopB (popB).